We begin with the raw amino-acid sequence, 278 residues long: Biotin synthase (278 aa).

Residues 1 to 227 (MQIMLCAISN…QSVVMVAGGR (227 aa)) form the Radical SAM core domain. [4Fe-4S] cluster contacts are provided by cysteine 16, cysteine 20, and cysteine 23. [2Fe-2S] cluster-binding residues include cysteine 60, asparagine 96, and cysteine 154.

Belongs to the radical SAM superfamily. Biotin synthase family. In terms of assembly, homodimer. It depends on [4Fe-4S] cluster as a cofactor. [2Fe-2S] cluster is required as a cofactor.

The enzyme catalyses (4R,5S)-dethiobiotin + (sulfur carrier)-SH + 2 reduced [2Fe-2S]-[ferredoxin] + 2 S-adenosyl-L-methionine = (sulfur carrier)-H + biotin + 2 5'-deoxyadenosine + 2 L-methionine + 2 oxidized [2Fe-2S]-[ferredoxin]. It functions in the pathway cofactor biosynthesis; biotin biosynthesis; biotin from 7,8-diaminononanoate: step 2/2. In terms of biological role, catalyzes the conversion of dethiobiotin (DTB) to biotin by the insertion of a sulfur atom into dethiobiotin via a radical-based mechanism. This is Biotin synthase from Campylobacter jejuni subsp. jejuni serotype O:2 (strain ATCC 700819 / NCTC 11168).